Reading from the N-terminus, the 130-residue chain is MSMQDPIADMLTRIRNGQAANKVAISMPSSKLKVAIANVLAEEGYIANVKVSEGVKPELEITLKYFQGKPVVESIQRVSRPGLRIYKRKNELPKVMGGLGVAVVSTSKGIMTDRKARQAGLGGEIICYVA.

The protein belongs to the universal ribosomal protein uS8 family. In terms of assembly, part of the 30S ribosomal subunit. Contacts proteins S5 and S12.

In terms of biological role, one of the primary rRNA binding proteins, it binds directly to 16S rRNA central domain where it helps coordinate assembly of the platform of the 30S subunit. The chain is Small ribosomal subunit protein uS8 from Histophilus somni (strain 129Pt) (Haemophilus somnus).